The following is a 193-amino-acid chain: MTISIYSHTFQSVPQADYVSLLKLRYKVFSQRLQWELKTNRGMETDEYDVPEAHYLYAKEEQGHLVGCWRILPTTSRYMLKDTFSELLGVQQAPKAKEIYELSRFAVDKDHSAQLGGVSNVTLQMFQSLYHHAQQYHINAYVTVTSASVEKLIKRMGIPCERLGDKKVHLLGSTRSVALHIPMNEAYRASVNA.

This sequence belongs to the autoinducer synthase family.

It catalyses the reaction a fatty acyl-[ACP] + S-adenosyl-L-methionine = an N-acyl-L-homoserine lactone + S-methyl-5'-thioadenosine + holo-[ACP] + H(+). Required for the synthesis of N-(3-oxodecanoyl)-L-homoserine lactone (ODHL), an autoinducer molecule which binds to VanR. In Vibrio anguillarum (Listonella anguillarum), this protein is Acyl-homoserine-lactone synthase (vanI).